Reading from the N-terminus, the 1357-residue chain is MSLNFLPGRPNATPQTACQATWQNHTIFAYCSGNNLIILTNKFTRLQTIYTQSDCTAVDINSQNGFIALSFHNRVLIYKPIHQIMQNPKWTQCCQLFHDDTPVNCLRWSSDNELAIGSDFLSFWKIKDNFGVYQPILQWNQKQPKPVYNVIISQDSQLIVSIGKYDCNAKLWKRVSIVGEQAIFNLTMLPHPKPITAMRWKKEPDQVSKNNTASHALYTLCEDKVLRIWSCFEMEKNHTVQIWGEVPLSPTQKFCVIIDNWIIRQTLSVKDSEIFDISDSDIVILGSMTGEMEVLALNNLSQDPPKPMTKKTISHKKVKKATMLNDTRYLYLPEIQPYDNVKGKLSFLVHDLQGVIRHLLIDILQLINNKTEDLSAALEHKFTGHNKSVQKLVRSSDGEALLTTSRFSENGVWYPQKLNHGVSLRLQNTIQTESPIKFAVVHELGKQVICLLENGALQAWECPTNRKEDSEQKQSYLRVETRLKEEKKIHPIVMLNTPEPKHSHERHFTALIFSDGSIKAFEVSLTRGIFEVKSDSLDIDGDDIYKISIIDPVHQTFVSNRPLISLITKKGLTRTYKAIVNYNDRHVQWIKACEINTGIMNCTCIRGSSTGKLCIVNSTGKVMSLWDLNRGVLEYEETFHNPIEDIDWTSTEYGQSIVSIGFTGYALLYTQLRYDYTNNTPSYLPIEKIDITAHTAHNIGDSVWMKNGTFVVASGNQFYIKDKSLDLTDPFTYQSIGSRKILSNDILHLSSVLNGPLPVYHPQFLIQAIYANKLQLVKELLLRLFLALRKLDFESQDVSNLDSNLGMDPLKYFIAKDRDYPVESFPDPYPCFNKTVSLALTEQLTKTTLPYLTRHQQITLITVIEAVDEVTKNENIVDYNGVRFLLGVKLFLSHKNIQKSILMRDVSWALHSDNKEILLSSIDRHITSWNRAREYRIAYWIKEQDLVKKFEDIAKYEFSKDDKRDPSRCAIFYLALKKKQILLSLWKMAIGHPEQQKMVRFISNDFTVPRWRTAALKNAFVLLSKHRYMDAAVFFLLTDSLKDCVNVLCKQVHDMDLAIGVCRVYEGDNGPVLGELLTAQMLPETIKENDRWKASFIYWKLRKQEVAIKALLTAPIDLENNSSIVDKEVCVNRSFLVEDPALLYLYNHLRNRNLKYFIGSLNVEAKIECTLILRVTDILCRMGCNYLAVSLVKNWKFIERNSIPVQKLLKSPTKDRAYSAIGAMASEPISTARMRPSLFDKFGSPSASDIESPNPKLPNSLLDDFLQPPPNSTSSNSLAQSSSSAPRSILDEFVSPSYSQHKENLTPKAPNDSVGETDNSENRKDKLSKDILDDLSSQKPQKPKKSAITKNLLDDFV.

WD repeat units follow at residues 98 to 134 (HDDTPVNCLRWSSDNELAIGSDFLSFWKIKDNFGVYQ), 142 to 182 (KQPK…GEQA), 190 to 239 (PHPK…KNHT), 384 to 423 (GHNKSVQKLVRSSDGEALLTTSRFSENGVWYPQKLNHGVS), 431 to 470 (QTESPIKFAVVHELGKQVICLLENGALQAWECPTNRKEDS), 595 to 636 (INTG…LEYE), 638 to 679 (TFHN…YTNN), and 898 to 939 (QKSI…RIAY). Residues 1243–1357 (GSPSASDIES…ITKNLLDDFV (115 aa)) form a disordered region. A phosphoserine mark is found at Ser-1244 and Ser-1248. Residues 1272–1288 (STSSNSLAQSSSSAPRS) are compositionally biased toward low complexity. The segment covering 1320-1332 (SENRKDKLSKDIL) has biased composition (basic and acidic residues).

As to quaternary structure, component of the RAVE complex composed of RAV1, RAV2 and CBF3D/SKP1. Within the complex, it interacts directly with RAV2 and CBF3D. Interacts with the V-ATPase V1 subunits VMA1, VMA2 and VMA8.

Its subcellular location is the endomembrane system. In terms of biological role, component of the RAVE complex, which is required for stable assembly of the vacuolar ATPase complex V-ATPase under many conditions. Required for transport between the early endosome and the late endosome/prevacuolar compartment (PVC), suggesting that assembly of vacuolar ATPase at the early endosome is required for transport from the early endosome to the PVC. In Saccharomyces cerevisiae (strain ATCC 204508 / S288c) (Baker's yeast), this protein is Regulator of V-ATPase in vacuolar membrane protein 1 (RAV1).